The sequence spans 633 residues: Extracellular metalloproteinase 3 (633 aa).

The first 18 residues, 1-18 (MHGLLLAGLLALPMNVLA), serve as a signal peptide directing secretion. A propeptide spanning residues 19–246 (HPAEQHASNV…VHNVVDYVAS (228 aa)) is cleaved from the precursor. Residue asparagine 410 is glycosylated (N-linked (GlcNAc...) asparagine). Histidine 429 provides a ligand contact to Zn(2+). Residue glutamate 430 is part of the active site. Histidine 433 contacts Zn(2+). N-linked (GlcNAc...) asparagine glycans are attached at residues asparagine 480 and asparagine 622.

It belongs to the peptidase M36 family. It depends on Zn(2+) as a cofactor.

The protein resides in the secreted. Secreted metalloproteinase probably acting as a virulence factor. This chain is Extracellular metalloproteinase 3 (MEP3), found in Trichophyton equinum (Horse ringworm fungus).